The chain runs to 1577 residues: Pentafunctional AROM polypeptide (1577 aa).

Residues 1–392 form a 3-dehydroquinate synthase region; sequence MASVGLEKVN…YGTSAHVVSD (392 aa). Residues 80–83, 111–113, and Asp-116 each bind NAD(+); these read ETYK and GGV. Arg-127 serves as a coordination point for 7-phospho-2-dehydro-3-deoxy-D-arabino-heptonate. 136-137 contacts NAD(+); that stretch reads TS. 7-phospho-2-dehydro-3-deoxy-D-arabino-heptonate-binding residues include Asp-143 and Lys-149. Lys-158 lines the NAD(+) pocket. Position 159 (Asn-159) interacts with 7-phospho-2-dehydro-3-deoxy-D-arabino-heptonate. NAD(+)-binding positions include 176–179 and Asn-187; that span reads WLET. A Zn(2+)-binding site is contributed by Glu-191. 7-phospho-2-dehydro-3-deoxy-D-arabino-heptonate-binding positions include 191–194 and Lys-258; that span reads EVIK. Glu-268 acts as the Proton acceptor; for 3-dehydroquinate synthase activity in catalysis. Residues 272 to 276 and His-279 contribute to the 7-phospho-2-dehydro-3-deoxy-D-arabino-heptonate site; that span reads RNLLN. His-279 is a Zn(2+) binding site. His-283 functions as the Proton acceptor; for 3-dehydroquinate synthase activity in the catalytic mechanism. The 7-phospho-2-dehydro-3-deoxy-D-arabino-heptonate site is built by His-295 and Lys-364. Residue His-295 participates in Zn(2+) binding. The EPSP synthase stretch occupies residues 405–863; the sequence is VYPFTDVRSS…WDVLHSRLGA (459 aa). Residue Cys-845 is the For EPSP synthase activity of the active site. The shikimate kinase stretch occupies residues 882–1071; that stretch reads VVLIGMRAAG…VPVKRSTFVC (190 aa). ATP is bound at residue 886 to 893; sequence GMRAAGKS. The 3-dehydroquinase stretch occupies residues 1072–1284; sequence LTFQNLLPEM…AAPGQLTLRQ (213 aa). The Proton acceptor; for 3-dehydroquinate dehydratase activity role is filled by His-1189. Residue Lys-1218 is the Schiff-base intermediate with substrate; for 3-dehydroquinate dehydratase activity of the active site. Positions 1297–1577 are shikimate dehydrogenase; that stretch reads PKKMFVVGSP…APVYDAVTQE (281 aa).

The protein in the N-terminal section; belongs to the sugar phosphate cyclases superfamily. Dehydroquinate synthase family. It in the 2nd section; belongs to the EPSP synthase family. In the 3rd section; belongs to the shikimate kinase family. This sequence in the 4th section; belongs to the type-I 3-dehydroquinase family. The protein in the C-terminal section; belongs to the shikimate dehydrogenase family. As to quaternary structure, homodimer. Zn(2+) serves as cofactor.

Its subcellular location is the cytoplasm. It carries out the reaction 7-phospho-2-dehydro-3-deoxy-D-arabino-heptonate = 3-dehydroquinate + phosphate. The enzyme catalyses 3-dehydroquinate = 3-dehydroshikimate + H2O. The catalysed reaction is shikimate + NADP(+) = 3-dehydroshikimate + NADPH + H(+). It catalyses the reaction shikimate + ATP = 3-phosphoshikimate + ADP + H(+). It carries out the reaction 3-phosphoshikimate + phosphoenolpyruvate = 5-O-(1-carboxyvinyl)-3-phosphoshikimate + phosphate. It participates in metabolic intermediate biosynthesis; chorismate biosynthesis; chorismate from D-erythrose 4-phosphate and phosphoenolpyruvate: step 2/7. Its pathway is metabolic intermediate biosynthesis; chorismate biosynthesis; chorismate from D-erythrose 4-phosphate and phosphoenolpyruvate: step 3/7. The protein operates within metabolic intermediate biosynthesis; chorismate biosynthesis; chorismate from D-erythrose 4-phosphate and phosphoenolpyruvate: step 4/7. It functions in the pathway metabolic intermediate biosynthesis; chorismate biosynthesis; chorismate from D-erythrose 4-phosphate and phosphoenolpyruvate: step 5/7. It participates in metabolic intermediate biosynthesis; chorismate biosynthesis; chorismate from D-erythrose 4-phosphate and phosphoenolpyruvate: step 6/7. Its function is as follows. The AROM polypeptide catalyzes 5 consecutive enzymatic reactions in prechorismate polyaromatic amino acid biosynthesis. This Eremothecium gossypii (strain ATCC 10895 / CBS 109.51 / FGSC 9923 / NRRL Y-1056) (Yeast) protein is Pentafunctional AROM polypeptide.